The primary structure comprises 319 residues: Glycine--tRNA ligase alpha subunit (319 aa).

It belongs to the class-II aminoacyl-tRNA synthetase family. In terms of assembly, tetramer of two alpha and two beta subunits.

The protein localises to the cytoplasm. The catalysed reaction is tRNA(Gly) + glycine + ATP = glycyl-tRNA(Gly) + AMP + diphosphate. The sequence is that of Glycine--tRNA ligase alpha subunit from Oenococcus oeni (strain ATCC BAA-331 / PSU-1).